Reading from the N-terminus, the 38-residue chain is Iota-conotoxin-like L11.5 (38 aa).

Cystine bridges form between Cys-5–Cys-19, Cys-12–Cys-24, Cys-18–Cys-29, and Cys-23–Cys-36.

The protein belongs to the conotoxin I1 superfamily. In terms of tissue distribution, expressed by the venom duct.

It localises to the secreted. Its function is as follows. Iota-conotoxins bind to voltage-gated sodium channels (Nav) and act as agonists by shifting the voltage-dependence of activation to more hyperpolarized levels. Produces general excitatory symptoms. This Conus lynceus (Lynceus cone) protein is Iota-conotoxin-like L11.5.